A 572-amino-acid polypeptide reads, in one-letter code: Periplasmic pectate lyase (572 aa).

The N-terminal stretch at 1–23 is a signal peptide; that stretch reads MKKRALLLSMSVLAMLYIPAGQA.

Belongs to the polysaccharide lyase 2 family.

Its subcellular location is the periplasm. The enzyme catalyses Eliminative cleavage of (1-&gt;4)-alpha-D-galacturonan to give oligosaccharides with 4-deoxy-alpha-D-galact-4-enuronosyl groups at their non-reducing ends.. Its pathway is glycan metabolism; pectin degradation; 2-dehydro-3-deoxy-D-gluconate from pectin: step 2/5. The chain is Periplasmic pectate lyase (pelY) from Yersinia pseudotuberculosis serotype I (strain IP32953).